Reading from the N-terminus, the 124-residue chain is Ribonuclease VapC32 (124 aa).

The PINc domain occupies 2-112; the sequence is ILVDTSVWIE…TRDKRLKAAC (111 aa). The Mg(2+) site is built by D5 and D86.

Belongs to the PINc/VapC protein family. Requires Mg(2+) as cofactor.

Its function is as follows. Toxic component of a type II toxin-antitoxin (TA) system. An RNase. Its toxic effect is neutralized by coexpression with cognate antitoxin VapB32. The polypeptide is Ribonuclease VapC32 (Mycobacterium tuberculosis (strain CDC 1551 / Oshkosh)).